An 876-amino-acid polypeptide reads, in one-letter code: MGPLSREAWAQRLGSFRASPSAFLAGAEGEDLGHDLLSDLRSEKLSELIKVSLLTLSLEYSDKLWPDALAAEAAATSLLDTLVLLPSKPSALRRLLLLAATTALVSGGALGPTSEASSRLLPLLLGLASGQDMGRSFGTTSEQRHLQATACECLGELERCKPGLLAGALGVLRSLLGQKGPIQPVSLLLALVLHNTLVVQSRFGAGLQGLLVAKDSSPGSCPWDWTLAEEWDDHLKPQAHGWPTAGEEERDFPILDPNPEDTRELKAAVAQLLDTSYLLTPVAQAQLVWLLGWALQGLRGQPPVLFKPQLVRLLGTAQLTLLHSVLSLKAAFGEALFTAQDEALLLRRLTLVAQHPALPSPTHLFYLHCILSFPENCPLGPEGEEAAPLLLGPQLRRGLMPSLLHDPMVLLARLHLLCLLCADDEEEEKGQLQGPQWFLQELLAGLQQRAAVDGGPRALATLCFQASYLVTSCLTRQPTVQTSLVHGLAQLYRARPSLAPHFVDLLDEVSPELREPLRKVLLREVVARPGKNEALRWHLQMLAKVAEGATQSAILGFLQAAAIHCTDWGLHQALLRVCRALLRTGGGEGLADLLQELARQLENADGRDHARLYYVLLSHLSSSKLGMALGPSLAAPALASSLMAENQGFASALMVQETSAPIQLSVGPQKAKGPLPVLHLQVQALDTPVYSLELRFRVEGQLYEPVEAVHIPSVRPGQPAHPLHLPLQPRSPAPARLHVRALYTTPAGLTCHAHLPPLSVNFADLFLPFPQLPKGSELCFFDELWNSCLPKGVESRVWCPLGPQGLEALVSQHLEPFVVVAQPPTTYLIAVRLPPHSMLLLRLEKAQVHGVPVALRTDDWAVLPLVGDYLRGLAAH.

In terms of assembly, probably part of the adaptor protein complex 5 (AP-5), a tetramer composed of AP5B1, AP5M1, AP5S1 and AP5Z1. Interacts with ZFYVE26 and SPG11.

Its function is as follows. As part of AP-5, a probable fifth adaptor protein complex, it may be involved in endosomal transport. The sequence is that of AP-5 complex subunit beta-1 (Ap5b1) from Rattus norvegicus (Rat).